A 233-amino-acid chain; its full sequence is Short chain dehydrogenase trt9 (233 aa).

Residues Asp-33, Arg-95, Tyr-127, Lys-131, and Val-160 each contribute to the NADP(+) site. Residue Tyr-127 is the Proton donor of the active site. Lys-131 functions as the Lowers pKa of active site Tyr in the catalytic mechanism.

The protein belongs to the short-chain dehydrogenases/reductases (SDR) family.

The protein operates within secondary metabolite biosynthesis; terpenoid biosynthesis. Short chain dehydrogenase; part of the gene cluster that mediates the biosynthesis of terretonin, a fungal meroterpenoid that acts as a mycotoxin. The first step of the pathway is the synthesis of 3,5-dimethylorsellinic acid (DMOA) by the polyketide synthase trt4. DMOA is then prenylated into farnesyl-DMOA by the polyprenyl transferase trt2. Methylation by the methyltransferase trt5 then leads to farnesyl-DMOA methyl ester which is further subject to epoxidation by the FAD-dependent monooxygenase trt8 to yield epoxyfarnesyl-DMOA methyl ester. Cyclization of epoxyfarnesyl-DMOA methyl ester by the terpene cyclase trt1 leads to a tetracycle intermediate which is in turn converted to preterretonin. Dehydrogenase trt9 comes next to transform preterretonin to preterrenoid. The FAD-dependent monooxygenase trt3 is then required for the C-hydroxylation at C16 of preterrenoid to yield terrenoid. The cytochrome P450 trt6 catalyzes three successive oxidations to transform terrenoid into an unstable intermediate, which then undergoes the D-ring expansion and unusual rearrangement of the methoxy group to afford the core skeleton of terretonin. Trt14 catalyzes the D-ring expansion of terretonin involving intramolecular methoxy rearrangement as well as the hydrolysis of the expanded D-ring and the methyl ester moiety. Finally, the nonheme iron-dependent dioxygenase trt7 accomplishes the last two oxidation reactions steps to complete the biosynthesis of terretonin. Terretonin C is produced via spontaneous decarboxylation of the terretonin precursor. Another shunt product of the terretonin biosynthesis is dihydrofarnesyl-DMOA, derived from epoxyfarnesyl-DMOA through hydrolysis of the epoxide. The chain is Short chain dehydrogenase trt9 from Aspergillus terreus (strain NIH 2624 / FGSC A1156).